The primary structure comprises 219 residues: Thiamine-phosphate synthase (219 aa).

Residues 45 to 49 and N77 contribute to the 4-amino-2-methyl-5-(diphosphooxymethyl)pyrimidine site; that span reads QYREK. Residues D78 and D97 each coordinate Mg(2+). T116 contacts 4-amino-2-methyl-5-(diphosphooxymethyl)pyrimidine. A 2-[(2R,5Z)-2-carboxy-4-methylthiazol-5(2H)-ylidene]ethyl phosphate-binding site is contributed by 142–144; the sequence is SFT. K145 is a 4-amino-2-methyl-5-(diphosphooxymethyl)pyrimidine binding site. Residues G173 and 193–194 contribute to the 2-[(2R,5Z)-2-carboxy-4-methylthiazol-5(2H)-ylidene]ethyl phosphate site; that span reads VT.

This sequence belongs to the thiamine-phosphate synthase family. The cofactor is Mg(2+).

The enzyme catalyses 2-[(2R,5Z)-2-carboxy-4-methylthiazol-5(2H)-ylidene]ethyl phosphate + 4-amino-2-methyl-5-(diphosphooxymethyl)pyrimidine + 2 H(+) = thiamine phosphate + CO2 + diphosphate. The catalysed reaction is 2-(2-carboxy-4-methylthiazol-5-yl)ethyl phosphate + 4-amino-2-methyl-5-(diphosphooxymethyl)pyrimidine + 2 H(+) = thiamine phosphate + CO2 + diphosphate. It catalyses the reaction 4-methyl-5-(2-phosphooxyethyl)-thiazole + 4-amino-2-methyl-5-(diphosphooxymethyl)pyrimidine + H(+) = thiamine phosphate + diphosphate. The protein operates within cofactor biosynthesis; thiamine diphosphate biosynthesis; thiamine phosphate from 4-amino-2-methyl-5-diphosphomethylpyrimidine and 4-methyl-5-(2-phosphoethyl)-thiazole: step 1/1. Its function is as follows. Condenses 4-methyl-5-(beta-hydroxyethyl)thiazole monophosphate (THZ-P) and 2-methyl-4-amino-5-hydroxymethyl pyrimidine pyrophosphate (HMP-PP) to form thiamine monophosphate (TMP). This Caldicellulosiruptor bescii (strain ATCC BAA-1888 / DSM 6725 / KCTC 15123 / Z-1320) (Anaerocellum thermophilum) protein is Thiamine-phosphate synthase.